Here is a 474-residue protein sequence, read N- to C-terminus: Glutamine synthetase (474 aa).

The region spanning 15 to 99 (EDVQFIDVRF…MTFFIHDPIT (85 aa)) is the GS beta-grasp domain. The 368-residue stretch at 107–474 (PRNIAKKAET…PYEFTLYYDI (368 aa)) folds into the GS catalytic domain. Positions 132 and 134 each coordinate Mg(2+). Glu-210 serves as a coordination point for ATP. Glu-215 and Glu-223 together coordinate Mg(2+). Residues 267-268 (NG) and Gly-268 contribute to the L-glutamate site. A Mg(2+)-binding site is contributed by His-272. ATP is bound by residues 274-276 (HSS) and Ser-276. L-glutamate contacts are provided by Arg-325, Glu-331, and Arg-343. 3 residues coordinate ATP: Arg-343, Arg-348, and Lys-357. Glu-362 contributes to the Mg(2+) binding site. Residue Arg-364 coordinates L-glutamate. Tyr-402 is subject to O-AMP-tyrosine.

This sequence belongs to the glutamine synthetase family. As to quaternary structure, oligomer of 12 subunits arranged in the form of two hexagons. It depends on Mg(2+) as a cofactor.

The protein resides in the cytoplasm. It carries out the reaction L-glutamate + NH4(+) + ATP = L-glutamine + ADP + phosphate + H(+). Its activity is regulated as follows. The activity of this enzyme could be controlled by adenylation under conditions of abundant glutamine. Functionally, catalyzes the ATP-dependent biosynthesis of glutamine from glutamate and ammonia. In Frankia alni, this protein is Glutamine synthetase.